Consider the following 169-residue polypeptide: Endoribonuclease YbeY (169 aa).

3 residues coordinate Zn(2+): H126, H130, and H136.

This sequence belongs to the endoribonuclease YbeY family. Zn(2+) is required as a cofactor.

Its subcellular location is the cytoplasm. Functionally, single strand-specific metallo-endoribonuclease involved in late-stage 70S ribosome quality control and in maturation of the 3' terminus of the 16S rRNA. This is Endoribonuclease YbeY from Bradyrhizobium sp. (strain BTAi1 / ATCC BAA-1182).